The following is a 1828-amino-acid chain: Replicase large subunit (1828 aa).

The tract at residues 61-812 is methyltransferase; sequence RRDLSQEQLQ…QASSVTETSD (752 aa). Positions 82 to 302 constitute an Alphavirus-like MT domain; sequence VSSNCERGTH…HNLNQLMKYL (221 aa). Residues 701-728 adopt a coiled-coil conformation; it reads AAKHLEKRKEVAQQAVVEAVEAVRELRK. In terms of domain architecture, (+)RNA virus helicase ATP-binding spans 996–1154; it reads FMMNELVIYR…KLAIDETEYV (159 aa). Residues 1026–1289 are helicase; the sequence is DGVPGCGKST…RHRRSLVYYT (264 aa). Residues 1155–1320 form the (+)RNA virus helicase C-terminal domain; that stretch reads RLTYRSPVDV…MKNLCSELTK (166 aa). A coiled-coil region spans residues 1432-1496; it reads KLQEAVNEFE…KKETRLLHEL (65 aa). In terms of domain architecture, RdRp catalytic spans 1581–1694; that stretch reads FNAFEIDFSK…LFPKHLTIED (114 aa).

It belongs to the ssRNA positive-strand viruses RNA-directed RNA polymerase family. In terms of assembly, heterodimer of a large and a small subunit.

It catalyses the reaction RNA(n) + a ribonucleoside 5'-triphosphate = RNA(n+1) + diphosphate. The catalysed reaction is ATP + H2O = ADP + phosphate + H(+). Its function is as follows. Is an RNA-dependent RNA polymerase active in viral RNA replication. Is a methyltransferase active in RNA capping and an RNA helicase. Methyltransferase displays a cytoplasmic capping enzyme activity. This function is necessary since all viral RNAs are synthesized in the cytoplasm, and host capping enzymes are restricted to the nucleus. Helicase region probably exhibits NTPase and RNA unwinding activities (Potential). In Hordeum vulgare (Barley), this protein is Replicase large subunit (rep).